The sequence spans 184 residues: Photosystem I assembly protein Ycf4 (184 aa).

2 consecutive transmembrane segments (helical) span residues 19–39 (ISNF…LLVG) and 57–77 (IIFF…LFIS).

The protein belongs to the Ycf4 family.

The protein resides in the plastid. Its subcellular location is the chloroplast thylakoid membrane. Functionally, seems to be required for the assembly of the photosystem I complex. The polypeptide is Photosystem I assembly protein Ycf4 (Solanum bulbocastanum (Wild potato)).